A 472-amino-acid polypeptide reads, in one-letter code: uncharacterized protein (472 aa).

The next 6 helical transmembrane spans lie at 4–24, 27–47, 56–76, 99–119, 140–160, and 176–196; these read IIIL…FSVI, APIC…LPFF, AGFI…GKVV, ILAI…LFVV, LIPG…LPGT, and IYAA…AGML. The segment at 209 to 229 is disordered; it reads GEGYGGFDSQNAPAPESIESA. Low complexity predominate over residues 220–229; it reads APAPESIESA. 5 helical membrane-spanning segments follow: residues 240–260, 286–306, 323–343, 372–392, and 448–468; these read ALAF…TIYL, AAAI…TILF, IGGA…GGII, TALA…LSAM, and IFAI…IYSL.

This sequence belongs to the CitM (TC 2.A.11) transporter family.

It is found in the cell membrane. This is an uncharacterized protein from Bacillus subtilis (strain 168).